A 151-amino-acid polypeptide reads, in one-letter code: Macrodomain Ter protein (151 aa).

The protein belongs to the MatP family. In terms of assembly, homodimer.

The protein resides in the cytoplasm. Required for spatial organization of the terminus region of the chromosome (Ter macrodomain) during the cell cycle. Prevents early segregation of duplicated Ter macrodomains during cell division. Binds specifically to matS, which is a 13 bp signature motif repeated within the Ter macrodomain. The polypeptide is Macrodomain Ter protein (Yersinia pseudotuberculosis serotype IB (strain PB1/+)).